We begin with the raw amino-acid sequence, 186 residues long: Interferon beta-2 (186 aa).

The signal sequence occupies residues 1–21 (MTHRCLLQMVLLLCFSTTALS). Residues cysteine 52 and cysteine 161 are joined by a disulfide bond. Asparagine 131 and asparagine 173 each carry an N-linked (GlcNAc...) asparagine glycan.

Belongs to the alpha/beta interferon family. Monomer.

Its subcellular location is the secreted. In terms of biological role, has antiviral, antibacterial and anticancer activities. The polypeptide is Interferon beta-2 (IFNB2) (Bos taurus (Bovine)).